The sequence spans 404 residues: Phosphopentomutase (404 aa).

Mn(2+) contacts are provided by Asp10, Asp303, His308, Asp344, His345, and His356.

It belongs to the phosphopentomutase family. Mn(2+) serves as cofactor.

The protein resides in the cytoplasm. It catalyses the reaction 2-deoxy-alpha-D-ribose 1-phosphate = 2-deoxy-D-ribose 5-phosphate. It carries out the reaction alpha-D-ribose 1-phosphate = D-ribose 5-phosphate. It participates in carbohydrate degradation; 2-deoxy-D-ribose 1-phosphate degradation; D-glyceraldehyde 3-phosphate and acetaldehyde from 2-deoxy-alpha-D-ribose 1-phosphate: step 1/2. Its function is as follows. Isomerase that catalyzes the conversion of deoxy-ribose 1-phosphate (dRib-1-P) and ribose 1-phosphate (Rib-1-P) to deoxy-ribose 5-phosphate (dRib-5-P) and ribose 5-phosphate (Rib-5-P), respectively. The protein is Phosphopentomutase of Shewanella baltica (strain OS155 / ATCC BAA-1091).